A 307-amino-acid polypeptide reads, in one-letter code: Protoheme IX farnesyltransferase (307 aa).

Transmembrane regions (helical) follow at residues 28 to 48, 50 to 70, 100 to 120, 122 to 142, 149 to 169, 176 to 196, 218 to 238, 243 to 263, and 282 to 302; these read VTQLAVFCAVIGMFLATPGMV, WPVLIGGAVGIWLFAGAAFAI, ILLFSLVLGGAGMWTLHVFAN, LTMWLTFATFIGYAIIYTLLL, NIVIGGLSGAMPPALGWAAVA, AWILVLIIFTWTPPHFWALAL, FTLLHILLYTLIMVAATILPF, SGYLYLAVALVLGFGFLVHAW, and IVYLSLLFAALLIDHYFKFGP.

This sequence belongs to the UbiA prenyltransferase family. Protoheme IX farnesyltransferase subfamily.

The protein resides in the cell inner membrane. It carries out the reaction heme b + (2E,6E)-farnesyl diphosphate + H2O = Fe(II)-heme o + diphosphate. It participates in porphyrin-containing compound metabolism; heme O biosynthesis; heme O from protoheme: step 1/1. Functionally, converts heme B (protoheme IX) to heme O by substitution of the vinyl group on carbon 2 of heme B porphyrin ring with a hydroxyethyl farnesyl side group. The protein is Protoheme IX farnesyltransferase of Ralstonia nicotianae (strain ATCC BAA-1114 / GMI1000) (Ralstonia solanacearum).